A 219-amino-acid polypeptide reads, in one-letter code: Large ribosomal subunit protein uL4c (219 aa).

The tract at residues 53–81 (REHTASTKTKSQVRGGGKKPWKQKGTGRA) is disordered. Residues 68–79 (GGKKPWKQKGTG) are compositionally biased toward basic residues.

It belongs to the universal ribosomal protein uL4 family. In terms of assembly, part of the 50S ribosomal subunit.

Its subcellular location is the plastid. The protein localises to the chloroplast. In terms of biological role, probably binds the 23S rRNA. The chain is Large ribosomal subunit protein uL4c (rpl4) from Cyanidium caldarium (Red alga).